The primary structure comprises 107 residues: Phosphoribosyl-ATP pyrophosphatase (107 aa).

The protein belongs to the PRA-PH family.

It localises to the cytoplasm. It carries out the reaction 1-(5-phospho-beta-D-ribosyl)-ATP + H2O = 1-(5-phospho-beta-D-ribosyl)-5'-AMP + diphosphate + H(+). The protein operates within amino-acid biosynthesis; L-histidine biosynthesis; L-histidine from 5-phospho-alpha-D-ribose 1-diphosphate: step 2/9. This Bacillus cereus (strain G9842) protein is Phosphoribosyl-ATP pyrophosphatase.